The chain runs to 61 residues: U-scoloptoxin(14)-Sm1a (61 aa).

The signal sequence occupies residues 1–24; the sequence is MNPKLCMLLLVCLMAFYVIETVQA.

It belongs to the scoloptoxin-14 family. In terms of processing, contains 4 disulfide bonds. As to expression, expressed by the venom gland.

It localises to the secreted. The chain is U-scoloptoxin(14)-Sm1a from Scolopendra morsitans (Tanzanian blue ringleg centipede).